The chain runs to 211 residues: Superoxide dismutase [Fe] (211 aa).

Residues His-34, His-85, Asp-171, and His-175 each coordinate Fe cation.

The protein belongs to the iron/manganese superoxide dismutase family. Homotetramer. Fe cation is required as a cofactor.

Its subcellular location is the cytoplasm. The enzyme catalyses 2 superoxide + 2 H(+) = H2O2 + O2. In terms of biological role, destroys superoxide anion radicals which are normally produced within the cells and which are toxic to biological systems. In Saccharolobus solfataricus (strain ATCC 35092 / DSM 1617 / JCM 11322 / P2) (Sulfolobus solfataricus), this protein is Superoxide dismutase [Fe] (sod).